The following is a 450-amino-acid chain: Cyclin-A2-3 (450 aa).

Disordered stretches follow at residues A18–K53 and N75–A94. A compositionally biased stretch (polar residues) spans E23–V34.

The protein belongs to the cyclin family. Cyclin AB subfamily. In terms of assembly, interacts with CDKA-1. Interacts with SAMBA.

The protein localises to the nucleus. In terms of biological role, negatively regulates endocycles and acts as a regulator of ploidy levels in endoreduplication. Promotes divisions in the guard cells (GCs) after the guard mother cells (GMC) symmetric division. The polypeptide is Cyclin-A2-3 (CYCA2-3) (Arabidopsis thaliana (Mouse-ear cress)).